The sequence spans 806 residues: Leucine--tRNA ligase (806 aa).

Residues 40–51 carry the 'HIGH' region motif; that stretch reads PYPSGKGLHVGH. The 'KMSKS' region signature appears at 580-584; sequence KMSKS. Lys-583 serves as a coordination point for ATP.

This sequence belongs to the class-I aminoacyl-tRNA synthetase family.

It is found in the cytoplasm. It catalyses the reaction tRNA(Leu) + L-leucine + ATP = L-leucyl-tRNA(Leu) + AMP + diphosphate. This chain is Leucine--tRNA ligase, found in Ureaplasma parvum serovar 3 (strain ATCC 27815 / 27 / NCTC 11736).